Consider the following 267-residue polypeptide: Ribosomal RNA small subunit methyltransferase A (267 aa).

S-adenosyl-L-methionine-binding residues include Asn-18, Leu-20, Gly-45, Glu-66, Asp-91, and Asn-112.

Belongs to the class I-like SAM-binding methyltransferase superfamily. rRNA adenine N(6)-methyltransferase family. RsmA subfamily.

It is found in the cytoplasm. The enzyme catalyses adenosine(1518)/adenosine(1519) in 16S rRNA + 4 S-adenosyl-L-methionine = N(6)-dimethyladenosine(1518)/N(6)-dimethyladenosine(1519) in 16S rRNA + 4 S-adenosyl-L-homocysteine + 4 H(+). Specifically dimethylates two adjacent adenosines (A1518 and A1519) in the loop of a conserved hairpin near the 3'-end of 16S rRNA in the 30S particle. May play a critical role in biogenesis of 30S subunits. This chain is Ribosomal RNA small subunit methyltransferase A, found in Shewanella denitrificans (strain OS217 / ATCC BAA-1090 / DSM 15013).